The sequence spans 54 residues: Califin-C (54 aa).

C25 and C53 are oxidised to a cystine. At L36 the chain carries Leucine amide.

This sequence belongs to the molluscan ELH family. This protein consists of a large 36-residue subunit, bound by a single disulfide-bond to a small 18-residue subunit.

Its subcellular location is the secreted. Functionally, injected in sexually mature animals califin C excites LB and LC cells of the abdominal ganglion and cause egg-laying. This chain is Califin-C, found in Aplysia californica (California sea hare).